The primary structure comprises 1801 residues: Protein mono-ADP-ribosyltransferase PARP14 (1801 aa).

Residue Ser-33 is modified to Phosphoserine. Positions 109-132 (SKTKEDVKEPDVSEELDTKLPLDG) are disordered. 3 Macro domains span residues 791–978 (KCFS…KTVF), 1003–1190 (WEKG…ARRA), and 1216–1387 (DSGV…KKRE). A glycoprotein-binding positions include Asn-824, Leu-833, 922–926 (SSGVF), Asp-961, 1023–1024 (VQ), Ser-1034, 1046–1049 (LSKS), 1133–1137 (GTGNL), 1175–1178 (DHEN), 1235–1236 (DI), Ser-1247, Val-1258, 1332–1336 (GTGNA), and Phe-1371. A phosphoserine mark is found at Ser-1403 and Ser-1411. A WWE domain is found at 1523-1601 (EQESRADCIS…SLSVQRLTKS (79 aa)). The PARP catalytic domain maps to 1605–1801 (IPAHWSDMKQ…YPEYLITFRK (197 aa)).

Belongs to the ARTD/PARP family. Interacts with STAT6. Interacts with PARP10. Interacts with PARP9 in IFNG-stimulated macrophages; the interaction prevents PARP14-mediated STAT1 and STAT6 ADP-riboslylation. Auto-ADP-ribosylated. In terms of tissue distribution, expressed in macrophages.

It is found in the nucleus. Its subcellular location is the cytoplasm. The enzyme catalyses L-glutamyl-[protein] + NAD(+) = 5-O-(ADP-D-ribosyl)-L-glutamyl-[protein] + nicotinamide. In terms of biological role, ADP-ribosyltransferase that mediates mono-ADP-ribosylation of glutamate residues on target proteins. In contrast to PARP1 and PARP2, it is not able to mediate poly-ADP-ribosylation. Has been shown to catalyze the mono-ADP-ribosylation of STAT1 at 'Glu-657' and 'Glu-705', thus decreasing STAT1 phosphorylation which negatively regulates pro-inflammatory cytokine production in macrophages in response to IFNG stimulation. However, the role of ADP-ribosylation in the prevention of STAT1 phosphorylation has been called into question and it has been suggested that the inhibition of phosphorylation may be the result of sumoylation of STAT1 'Lys-703'. Mono-ADP-ribosylates STAT6; enhancing STAT6-dependent transcription. In macrophages, positively regulates MRC1 expression in response to IL4 stimulation by promoting STAT6 phosphorylation. Mono-ADP-ribosylates PARP9. This is Protein mono-ADP-ribosyltransferase PARP14 from Homo sapiens (Human).